A 144-amino-acid polypeptide reads, in one-letter code: Probable 4-amino-4-deoxy-L-arabinose-phosphoundecaprenol flippase subunit ArnF (144 aa).

Topologically, residues 1 to 6 (MTHRRA) are cytoplasmic. Residues 7–24 (TLCAMASVALVSAAQLGM) traverse the membrane as a helical segment. The Periplasmic segment spans residues 25–56 (RWSMSRLPSPVQWLEMQEHAQLDLSALRVVCA). Residues 57–77 (SITAYALSMLFWLLALRVLPL) form a helical membrane-spanning segment. Topologically, residues 78 to 80 (SRA) are cytoplasmic. The chain crosses the membrane as a helical span at residues 81–101 (YSLLSISYALVYTLAATLPFF). The Periplasmic portion of the chain corresponds to 102–104 (HET). Residues 105–125 (FTVSKTVGVSLIVAGVLTINL) traverse the membrane as a helical segment. The Cytoplasmic portion of the chain corresponds to 126-144 (RRLPRPSPQDLSHENQRFR).

This sequence belongs to the ArnF family. As to quaternary structure, heterodimer of ArnE and ArnF.

Its subcellular location is the cell inner membrane. It participates in bacterial outer membrane biogenesis; lipopolysaccharide biosynthesis. Translocates 4-amino-4-deoxy-L-arabinose-phosphoundecaprenol (alpha-L-Ara4N-phosphoundecaprenol) from the cytoplasmic to the periplasmic side of the inner membrane. This Pseudomonas syringae pv. syringae (strain B728a) protein is Probable 4-amino-4-deoxy-L-arabinose-phosphoundecaprenol flippase subunit ArnF.